The following is a 329-amino-acid chain: Ribosomal protein L11 methyltransferase (329 aa).

Residues T177, G198, D220, and N264 each contribute to the S-adenosyl-L-methionine site.

Belongs to the methyltransferase superfamily. PrmA family.

The protein localises to the cytoplasm. The enzyme catalyses L-lysyl-[protein] + 3 S-adenosyl-L-methionine = N(6),N(6),N(6)-trimethyl-L-lysyl-[protein] + 3 S-adenosyl-L-homocysteine + 3 H(+). In terms of biological role, methylates ribosomal protein L11. The polypeptide is Ribosomal protein L11 methyltransferase (Helicobacter pylori (strain Shi470)).